A 357-amino-acid polypeptide reads, in one-letter code: mRNA endoribonuclease toxin LS (357 aa).

Forms homodimer in solution. Forms a complex with cognate antitoxin RnlB and with enterobacteria phage T4 antitoxin Dmd.

The protein resides in the cytoplasm. Its function is as follows. Toxic component of a type II toxin-antitoxin (TA) system. A stable (half-life 27.6 minutes) endoribonuclease that in the absence of cognate antitoxin RnlB causes generalized RNA degradation. Degrades late enterobacteria phage T4 mRNAs, protecting the host against T4 reproduction. Activity is inhibited by cognate antitoxin RnlB and by enterobacteria phage T4 protein Dmd. Targets cyaA mRNA. This is mRNA endoribonuclease toxin LS (rnlA) from Escherichia coli (strain K12).